Reading from the N-terminus, the 363-residue chain is Spermidine/putrescine import ATP-binding protein PotA (363 aa).

One can recognise an ABC transporter domain in the interval 4-234; sequence LEIRNVTRRF…PRNHFVADFI (231 aa). 36-43 contributes to the ATP binding site; it reads GPSGCGKT.

Belongs to the ABC transporter superfamily. Spermidine/putrescine importer (TC 3.A.1.11.1) family. As to quaternary structure, the complex is composed of two ATP-binding proteins (PotA), two transmembrane proteins (PotB and PotC) and a solute-binding protein (PotD).

The protein resides in the cell inner membrane. The enzyme catalyses ATP + H2O + polyamine-[polyamine-binding protein]Side 1 = ADP + phosphate + polyamineSide 2 + [polyamine-binding protein]Side 1.. Part of the ABC transporter complex PotABCD involved in spermidine/putrescine import. Responsible for energy coupling to the transport system. The chain is Spermidine/putrescine import ATP-binding protein PotA from Nitrosospira multiformis (strain ATCC 25196 / NCIMB 11849 / C 71).